The primary structure comprises 229 residues: Large ribosomal subunit protein uL1 (229 aa).

It belongs to the universal ribosomal protein uL1 family. As to quaternary structure, part of the 50S ribosomal subunit.

In terms of biological role, binds directly to 23S rRNA. The L1 stalk is quite mobile in the ribosome, and is involved in E site tRNA release. Functionally, protein L1 is also a translational repressor protein, it controls the translation of the L11 operon by binding to its mRNA. This is Large ribosomal subunit protein uL1 from Flavobacterium psychrophilum (strain ATCC 49511 / DSM 21280 / CIP 103535 / JIP02/86).